Reading from the N-terminus, the 363-residue chain is MTDSPRRRFLMMAGGTGGHVFPALATARALQQRGHEVHWLGASGGMEERLIGDTDIPLSLIHISGLRGKGKLALLLAPFRLMRALGEAYTHLRRIRPDCVVGMGGFVTGPGGIAAWLMRKPLVIHEQNAIAGMTNRWLTRFSETVLEAFPGSFGDQTVTRCTGNPVRGEVASMDEPEQRLAGRSGKLRVLVVGGSLGAQVFNQQLPQALALMPEADRPDVRHQCGEKNLEAAQAAYEEAGVNASVEPFIRDMAEAYGWADLVICRAGALTVSELCAAGIGAILVPFPHAVDDHQTRNGQHMVKAGAAILVPQPRLTPEVLAETLKDLATDRKRILTMAKAARSLARPDATERVVNYCLEAANG.

Residues 16 to 18 (TGG), asparagine 128, arginine 167, serine 195, isoleucine 249, 268 to 273 (ALTVSE), and glutamine 294 contribute to the UDP-N-acetyl-alpha-D-glucosamine site.

Belongs to the glycosyltransferase 28 family. MurG subfamily.

It is found in the cell inner membrane. The catalysed reaction is di-trans,octa-cis-undecaprenyl diphospho-N-acetyl-alpha-D-muramoyl-L-alanyl-D-glutamyl-meso-2,6-diaminopimeloyl-D-alanyl-D-alanine + UDP-N-acetyl-alpha-D-glucosamine = di-trans,octa-cis-undecaprenyl diphospho-[N-acetyl-alpha-D-glucosaminyl-(1-&gt;4)]-N-acetyl-alpha-D-muramoyl-L-alanyl-D-glutamyl-meso-2,6-diaminopimeloyl-D-alanyl-D-alanine + UDP + H(+). It participates in cell wall biogenesis; peptidoglycan biosynthesis. In terms of biological role, cell wall formation. Catalyzes the transfer of a GlcNAc subunit on undecaprenyl-pyrophosphoryl-MurNAc-pentapeptide (lipid intermediate I) to form undecaprenyl-pyrophosphoryl-MurNAc-(pentapeptide)GlcNAc (lipid intermediate II). The sequence is that of UDP-N-acetylglucosamine--N-acetylmuramyl-(pentapeptide) pyrophosphoryl-undecaprenol N-acetylglucosamine transferase from Marinobacter nauticus (strain ATCC 700491 / DSM 11845 / VT8) (Marinobacter aquaeolei).